The primary structure comprises 288 residues: Small ribosomal subunit protein uS3 (288 aa).

One can recognise a KH type-2 domain in the interval 38–106; sequence IRRMMSKGLE…QVQLNIIEVK (69 aa). The tract at residues 209-288 is disordered; sequence PGRETPAEAP…TQPAETQQEG (80 aa). Residues 219–232 are compositionally biased toward basic and acidic residues; sequence SRPRRERGDRSERP. Low complexity predominate over residues 249-264; that stretch reads AGRAAATTIAQAAETP. Over residues 277-288 the composition is skewed to polar residues; that stretch reads AATQPAETQQEG.

This sequence belongs to the universal ribosomal protein uS3 family. Part of the 30S ribosomal subunit. Forms a tight complex with proteins S10 and S14.

Functionally, binds the lower part of the 30S subunit head. Binds mRNA in the 70S ribosome, positioning it for translation. The sequence is that of Small ribosomal subunit protein uS3 from Salinispora arenicola (strain CNS-205).